The chain runs to 267 residues: Hydroxyethylthiazole kinase 2 (267 aa).

Residue Met41 coordinates substrate. Positions 116 and 166 each coordinate ATP. Gly193 lines the substrate pocket.

Belongs to the Thz kinase family. Mg(2+) is required as a cofactor.

The catalysed reaction is 5-(2-hydroxyethyl)-4-methylthiazole + ATP = 4-methyl-5-(2-phosphooxyethyl)-thiazole + ADP + H(+). It functions in the pathway cofactor biosynthesis; thiamine diphosphate biosynthesis; 4-methyl-5-(2-phosphoethyl)-thiazole from 5-(2-hydroxyethyl)-4-methylthiazole: step 1/1. Catalyzes the phosphorylation of the hydroxyl group of 4-methyl-5-beta-hydroxyethylthiazole (THZ). In Streptococcus pneumoniae (strain 70585), this protein is Hydroxyethylthiazole kinase 2.